We begin with the raw amino-acid sequence, 220 residues long: Uracil-DNA glycosylase (220 aa).

D65 functions as the Proton acceptor in the catalytic mechanism.

This sequence belongs to the uracil-DNA glycosylase (UDG) superfamily. UNG family.

The protein localises to the cytoplasm. The catalysed reaction is Hydrolyzes single-stranded DNA or mismatched double-stranded DNA and polynucleotides, releasing free uracil.. In terms of biological role, excises uracil residues from the DNA which can arise as a result of misincorporation of dUMP residues by DNA polymerase or due to deamination of cytosine. The polypeptide is Uracil-DNA glycosylase (Phocaeicola vulgatus (strain ATCC 8482 / DSM 1447 / JCM 5826 / CCUG 4940 / NBRC 14291 / NCTC 11154) (Bacteroides vulgatus)).